A 207-amino-acid chain; its full sequence is Glycerol-3-phosphate acyltransferase (207 aa).

The next 5 membrane-spanning stretches (helical) occupy residues 4-24 (VVAT…SFAV), 58-78 (ILTL…AQLL), 86-106 (DMGI…PVFH), 120-140 (ILLA…LIIA), and 162-182 (VLLF…VLLI).

The protein belongs to the PlsY family. In terms of assembly, probably interacts with PlsX.

The protein localises to the cell inner membrane. The catalysed reaction is an acyl phosphate + sn-glycerol 3-phosphate = a 1-acyl-sn-glycero-3-phosphate + phosphate. It functions in the pathway lipid metabolism; phospholipid metabolism. In terms of biological role, catalyzes the transfer of an acyl group from acyl-phosphate (acyl-PO(4)) to glycerol-3-phosphate (G3P) to form lysophosphatidic acid (LPA). This enzyme utilizes acyl-phosphate as fatty acyl donor, but not acyl-CoA or acyl-ACP. This is Glycerol-3-phosphate acyltransferase from Ralstonia nicotianae (strain ATCC BAA-1114 / GMI1000) (Ralstonia solanacearum).